Here is a 118-residue protein sequence, read N- to C-terminus: Large ribosomal subunit protein bL20 (118 aa).

Belongs to the bacterial ribosomal protein bL20 family.

In terms of biological role, binds directly to 23S ribosomal RNA and is necessary for the in vitro assembly process of the 50S ribosomal subunit. It is not involved in the protein synthesizing functions of that subunit. This Bacillus mycoides (strain KBAB4) (Bacillus weihenstephanensis) protein is Large ribosomal subunit protein bL20.